Reading from the N-terminus, the 116-residue chain is Large ribosomal subunit protein bL20 (116 aa).

The protein belongs to the bacterial ribosomal protein bL20 family.

Its function is as follows. Binds directly to 23S ribosomal RNA and is necessary for the in vitro assembly process of the 50S ribosomal subunit. It is not involved in the protein synthesizing functions of that subunit. This is Large ribosomal subunit protein bL20 from Desulforapulum autotrophicum (strain ATCC 43914 / DSM 3382 / VKM B-1955 / HRM2) (Desulfobacterium autotrophicum).